The chain runs to 375 residues: Stomatin-2 (375 aa).

The interval 1-75 (MKTQPSEESA…IPVPTGQPRG (75 aa)) is disordered. Residues 11–50 (SPAPVNPGNSGNSGNRRASSTRISFSDQLDGGDSGDSSSN) are compositionally biased toward low complexity. Residues 120–140 (GLGFCGWFLMGLSWIMVISTF) form a helical membrane-spanning segment.

This sequence belongs to the band 7/mec-2 family.

It localises to the membrane. Its function is as follows. May be involved in cilia-related function. The polypeptide is Stomatin-2 (sto-2) (Caenorhabditis elegans).